The sequence spans 154 residues: 6,7-dimethyl-8-ribityllumazine synthase (154 aa).

Residues phenylalanine 15, 47 to 49, and 71 to 73 contribute to the 5-amino-6-(D-ribitylamino)uracil site; these read TFD and AVI. 76-77 contributes to the (2S)-2-hydroxy-3-oxobutyl phosphate binding site; sequence ET. Histidine 79 serves as the catalytic Proton donor. Leucine 104 contributes to the 5-amino-6-(D-ribitylamino)uracil binding site. Residue arginine 119 coordinates (2S)-2-hydroxy-3-oxobutyl phosphate.

This sequence belongs to the DMRL synthase family.

The catalysed reaction is (2S)-2-hydroxy-3-oxobutyl phosphate + 5-amino-6-(D-ribitylamino)uracil = 6,7-dimethyl-8-(1-D-ribityl)lumazine + phosphate + 2 H2O + H(+). Its pathway is cofactor biosynthesis; riboflavin biosynthesis; riboflavin from 2-hydroxy-3-oxobutyl phosphate and 5-amino-6-(D-ribitylamino)uracil: step 1/2. In terms of biological role, catalyzes the formation of 6,7-dimethyl-8-ribityllumazine by condensation of 5-amino-6-(D-ribitylamino)uracil with 3,4-dihydroxy-2-butanone 4-phosphate. This is the penultimate step in the biosynthesis of riboflavin. The sequence is that of 6,7-dimethyl-8-ribityllumazine synthase from Saccharolobus islandicus (strain M.16.27) (Sulfolobus islandicus).